We begin with the raw amino-acid sequence, 449 residues long: Immunoglobulin gamma-1 heavy chain (449 aa).

Pyrrolidone carboxylic acid is present on Gln1. 4 consecutive Ig-like domains span residues 1–96, 125–218, 240–339, and 348–444; these read QVQL…VYYC, PSVF…KKVE, PSVF…KTIS, and PQVY…KSLS. The segment at 1 to 119 is variable (V) domain, involved in antigen recognition; the sequence is QVQLVQSGGG…GQGTLVTVSS (119 aa). Disulfide bonds link Cys22/Cys96, Cys146/Cys202, Cys263/Cys323, and Cys369/Cys427. Asn73 is a glycosylation site (N-linked (GlcNAc...) asparagine). Positions 120-449 are constant (C) domain; the sequence is ASTKGPSVFP…QKSLSLSPGK (330 aa). An N-linked (GlcNAc...) (complex) asparagine glycan is attached at Asn299.

As to quaternary structure, immunoglobulins are composed of two identical heavy chains and two identical light chains; disulfide-linked.

The protein resides in the secreted. It localises to the cell membrane. Its function is as follows. Immunoglobulins, also known as antibodies, are membrane-bound or secreted glycoproteins produced by B lymphocytes. In the recognition phase of humoral immunity, the membrane-bound immunoglobulins serve as receptors which, upon binding of a specific antigen, trigger the clonal expansion and differentiation of B lymphocytes into immunoglobulins-secreting plasma cells. Secreted immunoglobulins mediate the effector phase of humoral immunity, which results in the elimination of bound antigens. The antigen binding site is formed by the variable domain of one heavy chain, together with that of its associated light chain. Thus, each immunoglobulin has two antigen binding sites with remarkable affinity for a particular antigen. The variable domains are assembled by a process called V-(D)-J rearrangement and can then be subjected to somatic hypermutations which, after exposure to antigen and selection, allow affinity maturation for a particular antigen. This chain is Immunoglobulin gamma-1 heavy chain, found in Homo sapiens (Human).